We begin with the raw amino-acid sequence, 160 residues long: uncharacterized protein (160 aa).

3 C2H2-type zinc fingers span residues 10–32 (LSCL…LPTH), 41–64 (QTCD…KRYH), and 75–98 (FQCQ…KIEH). Tyr-115 carries the phosphotyrosine modification. A Phosphoserine modification is found at Ser-116.

It is found in the nucleus. May be involved in transcriptional regulation. This is an uncharacterized protein from Drosophila melanogaster (Fruit fly).